Here is a 164-residue protein sequence, read N- to C-terminus: Interleukin-31 (164 aa).

The N-terminal stretch at 1 to 23 (MASHSGPSTSVLFLFCCLGGWLA) is a signal peptide. 2 N-linked (GlcNAc...) asparagine glycosylation sites follow: Asn67 and Asn100.

In terms of tissue distribution, detected at low levels in testis, bone marrow, skeletal muscle, kidney, colon, thymus, small intestine and trachea.

The protein resides in the secreted. Its function is as follows. Activates STAT3 and possibly STAT1 and STAT5 through the IL31 heterodimeric receptor composed of IL31RA and OSMR. May function in skin immunity. Enhances myeloid progenitor cell survival in vitro. Induces RETNLA and serum amyloid A protein expression in macrophages. The chain is Interleukin-31 (IL31) from Homo sapiens (Human).